Here is a 217-residue protein sequence, read N- to C-terminus: Imidazole glycerol phosphate synthase subunit HisH (217 aa).

The Glutamine amidotransferase type-1 domain occupies 3-217; the sequence is TIAIVDYGVG…LYRNFVHWNP (215 aa). Residue Cys82 is the Nucleophile of the active site. Active-site residues include His197 and Glu199.

In terms of assembly, heterodimer of HisH and HisF.

It is found in the cytoplasm. The catalysed reaction is 5-[(5-phospho-1-deoxy-D-ribulos-1-ylimino)methylamino]-1-(5-phospho-beta-D-ribosyl)imidazole-4-carboxamide + L-glutamine = D-erythro-1-(imidazol-4-yl)glycerol 3-phosphate + 5-amino-1-(5-phospho-beta-D-ribosyl)imidazole-4-carboxamide + L-glutamate + H(+). The enzyme catalyses L-glutamine + H2O = L-glutamate + NH4(+). The protein operates within amino-acid biosynthesis; L-histidine biosynthesis; L-histidine from 5-phospho-alpha-D-ribose 1-diphosphate: step 5/9. Functionally, IGPS catalyzes the conversion of PRFAR and glutamine to IGP, AICAR and glutamate. The HisH subunit catalyzes the hydrolysis of glutamine to glutamate and ammonia as part of the synthesis of IGP and AICAR. The resulting ammonia molecule is channeled to the active site of HisF. The chain is Imidazole glycerol phosphate synthase subunit HisH from Cupriavidus pinatubonensis (strain JMP 134 / LMG 1197) (Cupriavidus necator (strain JMP 134)).